The following is a 700-amino-acid chain: Stonustoxin subunit beta (700 aa).

The segment at 2–264 (PSDILVVAAL…EAPQLMADSS (263 aa)) is structural MACPF/CDC pore-forming domain. The structural FAT domain stretch occupies residues 265–384 (TPILRKVRNT…DILTKAKPKV (120 aa)). Residues 385-514 (IFNQGVLFKG…PYMPGVESIK (130 aa)) are thioredoxin (THX) domain. Positions 506-700 (YMPGVESIKD…QKVNGQIKLL (195 aa)) constitute a B30.2/SPRY domain.

Belongs to the SNTX/VTX toxin family. As to quaternary structure, heterodimer of alpha and beta subunits; non-covalently linked. Intrachain disulfide bonds may be present in the heterodimer. Post-translationally, not glycosylated. Expressed by the venom gland.

The protein localises to the secreted. In terms of biological role, this lethal (towards mammals) heterodimer induces hemolytic activities due to its ability to form pores in the cell membrane. The pore may be composed of 10 SNTX-alpha/beta heterodimers. The toxin elicits potent hypotension which is endothelium-dependent and appears to be mediated by the nitric oxide pathway and activation of potassium channels. In addition, it displays edema-inducing activities, increases vascular permeability. It also shows myotoxic activities and interferes irreversibly with neuromuscular function. It also induces irreversible platelet aggregation in rabbit or rat but not in human or mouse whole blood. In addition, it has been observed to increase spontaneous quantal acetylcholine release from isolated frog cutaneous pectoris motor endings. This is Stonustoxin subunit beta from Synanceia horrida (Estuarine stonefish).